Reading from the N-terminus, the 118-residue chain is SPbeta prophage-derived uncharacterized protein YomS (118 aa).

This is SPbeta prophage-derived uncharacterized protein YomS (yomS) from Bacillus subtilis (strain 168).